We begin with the raw amino-acid sequence, 107 residues long: Large ribosomal subunit protein uL24 (107 aa).

It belongs to the universal ribosomal protein uL24 family. As to quaternary structure, part of the 50S ribosomal subunit.

Functionally, one of two assembly initiator proteins, it binds directly to the 5'-end of the 23S rRNA, where it nucleates assembly of the 50S subunit. In terms of biological role, one of the proteins that surrounds the polypeptide exit tunnel on the outside of the subunit. The chain is Large ribosomal subunit protein uL24 from Carboxydothermus hydrogenoformans (strain ATCC BAA-161 / DSM 6008 / Z-2901).